Here is a 224-residue protein sequence, read N- to C-terminus: Serum amyloid P-component (224 aa).

The first 19 residues, 1 to 19 (MNKLMSWVSVLIILPEAFA), serve as a signal peptide directing secretion. One can recognise a Pentraxin (PTX) domain in the interval 24–224 (RGKVFVFPRE…YVIVKPMVWG (201 aa)). The N-linked (GlcNAc...) asparagine glycan is linked to asparagine 51. Cysteine 55 and cysteine 114 are disulfide-bonded. Residues aspartate 77, asparagine 78, glutamate 155, glutamine 156, and aspartate 157 each contribute to the Ca(2+) site. The N-linked (GlcNAc...) asparagine glycan is linked to asparagine 166. Glutamine 167 contributes to the Ca(2+) binding site.

This sequence belongs to the pentraxin family. Homopentamer. Pentraxin (or pentaxin) have a discoid arrangement of 5 non-covalently bound subunits. The cofactor is Ca(2+).

Its subcellular location is the secreted. This is Serum amyloid P-component (APCS) from Bos taurus (Bovine).